The primary structure comprises 161 residues: Large ribosomal subunit protein uL23m (161 aa).

A mitochondrion-targeting transit peptide spans Met-1–Val-34.

It belongs to the universal ribosomal protein uL23 family. In terms of assembly, component of the mitochondrial large ribosomal subunit (mt-LSU). Mature yeast 74S mitochondrial ribosomes consist of a small (37S) and a large (54S) subunit. The 37S small subunit contains a 15S ribosomal RNA (15S mt-rRNA) and at least 32 different proteins. The 54S large subunit contains a 21S rRNA (21S mt-rRNA) and at least 45 different proteins. uL23m forms the wall of the exit tunnel. Interacts with the C-terminus of OXA1.

It is found in the mitochondrion. Functionally, component of the mitochondrial ribosome (mitoribosome), a dedicated translation machinery responsible for the synthesis of mitochondrial genome-encoded proteins, including at least some of the essential transmembrane subunits of the mitochondrial respiratory chain. The mitoribosomes are attached to the mitochondrial inner membrane and translation products are cotranslationally integrated into the membrane. In Schizosaccharomyces pombe (strain 972 / ATCC 24843) (Fission yeast), this protein is Large ribosomal subunit protein uL23m (mrp20).